Consider the following 292-residue polypeptide: F-box protein SKIP28 (292 aa).

Residues 21–79 (LIVLPYLHSLFELLSMIRVSRSLRDAIRDETALWTKLVIEPPLSSRLTDDILSEFSSKS) enclose the F-box; degenerate domain.

In terms of assembly, part of a SCF (ASK-cullin-F-box) protein ligase complex. Interacts with SKP1A/ASK1 and CUL1.

The protein operates within protein modification; protein ubiquitination. In terms of biological role, component of SCF(ASK-cullin-F-box) E3 ubiquitin ligase complexes, which may mediate the ubiquitination and subsequent proteasomal degradation of target proteins. Required during the endosperm development in embryos. This chain is F-box protein SKIP28 (SKIP28), found in Arabidopsis thaliana (Mouse-ear cress).